The chain runs to 512 residues: 2,3-bisphosphoglycerate-independent phosphoglycerate mutase (512 aa).

Mn(2+)-binding residues include aspartate 12 and serine 62. Serine 62 functions as the Phosphoserine intermediate in the catalytic mechanism. Substrate-binding positions include histidine 123, 153–154 (RD), arginine 185, arginine 191, 260–263 (RPDR), and lysine 333. Mn(2+)-binding residues include aspartate 400, histidine 404, aspartate 441, histidine 442, and histidine 460.

The protein belongs to the BPG-independent phosphoglycerate mutase family. As to quaternary structure, monomer. Requires Mn(2+) as cofactor.

The enzyme catalyses (2R)-2-phosphoglycerate = (2R)-3-phosphoglycerate. It participates in carbohydrate degradation; glycolysis; pyruvate from D-glyceraldehyde 3-phosphate: step 3/5. Its function is as follows. Catalyzes the interconversion of 2-phosphoglycerate and 3-phosphoglycerate. This chain is 2,3-bisphosphoglycerate-independent phosphoglycerate mutase, found in Clostridium perfringens (strain 13 / Type A).